The primary structure comprises 368 residues: Peptide chain release factor 2 (368 aa).

Position 250 is an N5-methylglutamine (glutamine 250).

The protein belongs to the prokaryotic/mitochondrial release factor family. Methylated by PrmC. Methylation increases the termination efficiency of RF2.

Its subcellular location is the cytoplasm. In terms of biological role, peptide chain release factor 2 directs the termination of translation in response to the peptide chain termination codons UGA and UAA. In Chlamydia trachomatis serovar L2b (strain UCH-1/proctitis), this protein is Peptide chain release factor 2.